The chain runs to 532 residues: Chondroitin sulfate N-acetylgalactosaminyltransferase 1 (532 aa).

The Cytoplasmic portion of the chain corresponds to 1 to 14; it reads MMMVRRGLLAWISR. Residues 15 to 35 form a helical; Signal-anchor for type II membrane protein membrane-spanning segment; the sequence is VVVLLVLLCCAISVLYMLACT. The Lumenal segment spans residues 36 to 532; it reads PKGDEEQLAL…QKQKTSSKKT (497 aa). The stretch at 57–100 forms a coiled coil; that stretch reads YQAVLQEWEEQHRNYVSSLKRQIAQLKEELQERSEQLRNGQYQA. N-linked (GlcNAc...) asparagine glycans are attached at residues Asn315 and Asn324. A divalent metal cation is bound by residues Asp360 and His477.

This sequence belongs to the chondroitin N-acetylgalactosaminyltransferase family. In terms of processing, N-glycosylated. In terms of tissue distribution, ubiquitous, with the highest levels in placenta, thyroid, bladder, prostate and adrenal gland. Detected at low levels in the other tissues examined.

Its subcellular location is the golgi apparatus. It localises to the golgi stack membrane. The enzyme catalyses 3-O-(beta-D-GlcA-(1-&gt;3)-beta-D-Gal-(1-&gt;3)-beta-D-Gal-(1-&gt;4)-beta-D-Xyl)-L-seryl-[protein] + UDP-N-acetyl-alpha-D-galactosamine = 3-O-(beta-D-GalNAc-(1-&gt;4)-beta-D-GlcA-(1-&gt;3)-beta-D-Gal-(1-&gt;3)-beta-D-Gal-(1-&gt;4)-beta-D-Xyl)-L-seryl-[protein] + UDP + H(+). Transfers 1,4-N-acetylgalactosamine (GalNAc) from UDP-GalNAc to the non-reducing end of glucuronic acid (GlcUA). Required for addition of the first GalNAc to the core tetrasaccharide linker and for elongation of chondroitin chains. Important role in chondroitin chain biosynthesis in cartilage formation and subsequent endochondral ossification. Moreover, is involved in the metabolism of aggrecan. This Homo sapiens (Human) protein is Chondroitin sulfate N-acetylgalactosaminyltransferase 1.